Here is a 125-residue protein sequence, read N- to C-terminus: Small ribosomal subunit protein uS12 (125 aa).

Asp-89 is subject to 3-methylthioaspartic acid. The disordered stretch occupies residues 104-125 (LQGVKDRKQSRSKYGSKRPKKA). A compositionally biased stretch (basic residues) spans 113 to 125 (SRSKYGSKRPKKA).

This sequence belongs to the universal ribosomal protein uS12 family. As to quaternary structure, part of the 30S ribosomal subunit. Contacts proteins S8 and S17. May interact with IF1 in the 30S initiation complex.

With S4 and S5 plays an important role in translational accuracy. In terms of biological role, interacts with and stabilizes bases of the 16S rRNA that are involved in tRNA selection in the A site and with the mRNA backbone. Located at the interface of the 30S and 50S subunits, it traverses the body of the 30S subunit contacting proteins on the other side and probably holding the rRNA structure together. The combined cluster of proteins S8, S12 and S17 appears to hold together the shoulder and platform of the 30S subunit. This Leptothrix cholodnii (strain ATCC 51168 / LMG 8142 / SP-6) (Leptothrix discophora (strain SP-6)) protein is Small ribosomal subunit protein uS12.